The primary structure comprises 343 residues: Thromboxane A2 receptor (343 aa).

Residues Met1 to Trp29 lie on the Extracellular side of the membrane. N-linked (GlcNAc...) asparagine glycosylation is found at Asn4 and Asn16. A helical membrane pass occupies residues Phe30–Ala52. Over Arg53–Phe66 the chain is Cytoplasmic. Residues Leu67–Ser87 traverse the membrane as a helical segment. The Extracellular segment spans residues Gln88–Arg106. Cys105 and Cys183 are disulfide-bonded. A helical transmembrane segment spans residues Phe107 to Ser128. The Cytoplasmic portion of the chain corresponds to Glu129–Ala149. The helical transmembrane segment at Trp150–Gly172 threads the bilayer. Residues Arg173–Asp193 are Extracellular-facing. A helical transmembrane segment spans residues Val194–Val219. The Cytoplasmic portion of the chain corresponds to Ala220–Gln246. Residues Leu247–Leu270 traverse the membrane as a helical segment. Topologically, residues Arg271–Glu289 are extracellular. Residues Leu290–Phe311 form a helical membrane-spanning segment. At Arg312 to Gln343 the chain is on the cytoplasmic side. A phosphoserine mark is found at Ser329 and Ser331.

It belongs to the G-protein coupled receptor 1 family. Interacts with RPGRIP1L. Interacts with RACK1; the interaction regulates TBXA2R cell surface expression.

It localises to the cell membrane. Functionally, receptor for thromboxane A2 (TXA2), a potent stimulator of platelet aggregation. The activity of this receptor is mediated by a G-protein that activates a phosphatidylinositol-calcium second messenger system. In the kidney, the binding of TXA2 to glomerular TP receptors causes intense vasoconstriction. Activates phospholipase C and adenylyl cyclase. The chain is Thromboxane A2 receptor (TBXA2R) from Chlorocebus aethiops (Green monkey).